The sequence spans 787 residues: Protein FAM149A (787 aa).

7 disordered regions span residues 22 to 105, 144 to 175, 189 to 226, 238 to 284, 432 to 455, 573 to 602, and 665 to 697; these read SPAV…SSGA, GSNSVTASSPRNPRQLRAPGEREPSVWMAPGP, EEWTSDSDSQDDPEGRGLSEGLRKQSSEKSKDPLPTNF, ASES…SWRD, DGDEHLGQSPALRGRKRHRHGLPP, LQQRPTYSADRTQNDQDDKLPGGGVGASSR, and AVQTSRSRLPPIGSETGEPNTAASGSRPVSYRG. A compositionally biased stretch (polar residues) spans 37–46; that stretch reads SVDSGASTSL. Low complexity-rich tracts occupy residues 51-65 and 96-105; these read TLTLLPSLPPDTAAS and SGSLPSSSGA. Over residues 144 to 155 the composition is skewed to polar residues; sequence GSNSVTASSPRN. The span at 189–200 shows a compositional bias: acidic residues; that stretch reads EEWTSDSDSQDD. Basic and acidic residues predominate over residues 201 to 220; that stretch reads PEGRGLSEGLRKQSSEKSKD. Low complexity predominate over residues 239 to 250; it reads SESPSSFSSSGS. Polar residues predominate over residues 251 to 261; the sequence is RTPTEAHNSWP. A compositionally biased stretch (low complexity) spans 262-274; sequence GSSTQSSTTGLST.

This sequence belongs to the FAM149 family.

In Mus musculus (Mouse), this protein is Protein FAM149A (Fam149a).